We begin with the raw amino-acid sequence, 273 residues long: Dermonecrotic toxin LdSicTox-alphaIB1bi (273 aa).

His-5 is an active-site residue. Mg(2+) is bound by residues Glu-25 and Asp-27. His-41 acts as the Nucleophile in catalysis. Cystine bridges form between Cys-45–Cys-51 and Cys-47–Cys-190. Asp-85 is a binding site for Mg(2+). Asn-250 carries N-linked (GlcNAc...) asparagine glycosylation.

This sequence belongs to the arthropod phospholipase D family. Class II subfamily. Mg(2+) serves as cofactor. In terms of tissue distribution, expressed by the venom gland.

The protein localises to the secreted. The catalysed reaction is an N-(acyl)-sphingosylphosphocholine = an N-(acyl)-sphingosyl-1,3-cyclic phosphate + choline. The enzyme catalyses an N-(acyl)-sphingosylphosphoethanolamine = an N-(acyl)-sphingosyl-1,3-cyclic phosphate + ethanolamine. It catalyses the reaction a 1-acyl-sn-glycero-3-phosphocholine = a 1-acyl-sn-glycero-2,3-cyclic phosphate + choline. It carries out the reaction a 1-acyl-sn-glycero-3-phosphoethanolamine = a 1-acyl-sn-glycero-2,3-cyclic phosphate + ethanolamine. Functionally, dermonecrotic toxins cleave the phosphodiester linkage between the phosphate and headgroup of certain phospholipids (sphingolipid and lysolipid substrates), forming an alcohol (often choline) and a cyclic phosphate. This toxin acts on sphingomyelin (SM). It may also act on ceramide phosphoethanolamine (CPE), lysophosphatidylcholine (LPC) and lysophosphatidylethanolamine (LPE), but not on lysophosphatidylserine (LPS), and lysophosphatidylglycerol (LPG). It acts by transphosphatidylation, releasing exclusively cyclic phosphate products as second products. Induces dermonecrosis, hemolysis, increased vascular permeability, edema, inflammatory response, and platelet aggregation. The polypeptide is Dermonecrotic toxin LdSicTox-alphaIB1bi (Loxosceles deserta (Desert recluse spider)).